A 518-amino-acid chain; its full sequence is GMP synthase [glutamine-hydrolyzing] (518 aa).

One can recognise a Glutamine amidotransferase type-1 domain in the interval 8–201 (TVLIIDFGSQ…VHKISGLKGN (194 aa)). C85 serves as the catalytic Nucleophile. Catalysis depends on residues H175 and E177. The region spanning 202-393 (WSMASYRDQA…LGLPEQFLGR (192 aa)) is the GMPS ATP-PPase domain. Residue 229-235 (SGGVDSS) coordinates ATP.

Homodimer.

It catalyses the reaction XMP + L-glutamine + ATP + H2O = GMP + L-glutamate + AMP + diphosphate + 2 H(+). It participates in purine metabolism; GMP biosynthesis; GMP from XMP (L-Gln route): step 1/1. Catalyzes the synthesis of GMP from XMP. In Bartonella quintana (strain Toulouse) (Rochalimaea quintana), this protein is GMP synthase [glutamine-hydrolyzing].